A 394-amino-acid chain; its full sequence is Elongation factor Tu (394 aa).

Positions 10–204 (KPHVNVGTIG…ALDTYIPEPE (195 aa)) constitute a tr-type G domain. Residues 19–26 (GHVDHGKT) are G1. 19–26 (GHVDHGKT) contacts GTP. Residue Thr-26 coordinates Mg(2+). Positions 60 to 64 (GITIN) are G2. A G3 region spans residues 81-84 (DCPG). Residues 81-85 (DCPGH) and 136-139 (NKCD) each bind GTP. The segment at 136-139 (NKCD) is G4. Residues 174–176 (SAL) form a G5 region.

Belongs to the TRAFAC class translation factor GTPase superfamily. Classic translation factor GTPase family. EF-Tu/EF-1A subfamily. As to quaternary structure, monomer.

The protein resides in the cytoplasm. The catalysed reaction is GTP + H2O = GDP + phosphate + H(+). Its function is as follows. GTP hydrolase that promotes the GTP-dependent binding of aminoacyl-tRNA to the A-site of ribosomes during protein biosynthesis. In Shewanella sediminis (strain HAW-EB3), this protein is Elongation factor Tu.